Consider the following 131-residue polypeptide: Large ribosomal subunit protein bL12 (131 aa).

Belongs to the bacterial ribosomal protein bL12 family. As to quaternary structure, homodimer. Part of the ribosomal stalk of the 50S ribosomal subunit. Forms a multimeric L10(L12)X complex, where L10 forms an elongated spine to which 2 to 4 L12 dimers bind in a sequential fashion. Binds GTP-bound translation factors.

Forms part of the ribosomal stalk which helps the ribosome interact with GTP-bound translation factors. Is thus essential for accurate translation. The polypeptide is Large ribosomal subunit protein bL12 (Prochlorococcus marinus (strain MIT 9312)).